The primary structure comprises 910 residues: Leucine--tRNA ligase (910 aa).

The short motif at 50–60 is the 'HIGH' region element; the sequence is PYTNGSLHVGH. A 'KMSKS' region motif is present at residues 611–615; the sequence is KISKS. Lys614 is a binding site for ATP.

This sequence belongs to the class-I aminoacyl-tRNA synthetase family.

Its subcellular location is the cytoplasm. It carries out the reaction tRNA(Leu) + L-leucine + ATP = L-leucyl-tRNA(Leu) + AMP + diphosphate. This Thermoplasma volcanium (strain ATCC 51530 / DSM 4299 / JCM 9571 / NBRC 15438 / GSS1) protein is Leucine--tRNA ligase.